The following is a 741-amino-acid chain: Phosphoribosylformylglycinamidine synthase subunit PurL (741 aa).

His-54 is an active-site residue. ATP-binding residues include Tyr-57 and Lys-96. Glu-98 contributes to the Mg(2+) binding site. Substrate contacts are provided by residues 99-102 and Arg-121; that span reads SHNH. The active-site Proton acceptor is His-100. Asp-122 provides a ligand contact to Mg(2+). Gln-245 is a binding site for substrate. Mg(2+) is bound at residue Asp-273. 317 to 319 is a substrate binding site; the sequence is ESQ. ATP is bound by residues Asp-500 and Gly-537. Asn-538 serves as a coordination point for Mg(2+). Ser-540 serves as a coordination point for substrate.

It belongs to the FGAMS family. As to quaternary structure, monomer. Part of the FGAM synthase complex composed of 1 PurL, 1 PurQ and 2 PurS subunits.

The protein localises to the cytoplasm. The enzyme catalyses N(2)-formyl-N(1)-(5-phospho-beta-D-ribosyl)glycinamide + L-glutamine + ATP + H2O = 2-formamido-N(1)-(5-O-phospho-beta-D-ribosyl)acetamidine + L-glutamate + ADP + phosphate + H(+). Its pathway is purine metabolism; IMP biosynthesis via de novo pathway; 5-amino-1-(5-phospho-D-ribosyl)imidazole from N(2)-formyl-N(1)-(5-phospho-D-ribosyl)glycinamide: step 1/2. Functionally, part of the phosphoribosylformylglycinamidine synthase complex involved in the purines biosynthetic pathway. Catalyzes the ATP-dependent conversion of formylglycinamide ribonucleotide (FGAR) and glutamine to yield formylglycinamidine ribonucleotide (FGAM) and glutamate. The FGAM synthase complex is composed of three subunits. PurQ produces an ammonia molecule by converting glutamine to glutamate. PurL transfers the ammonia molecule to FGAR to form FGAM in an ATP-dependent manner. PurS interacts with PurQ and PurL and is thought to assist in the transfer of the ammonia molecule from PurQ to PurL. The sequence is that of Phosphoribosylformylglycinamidine synthase subunit PurL from Shouchella clausii (strain KSM-K16) (Alkalihalobacillus clausii).